The primary structure comprises 99 residues: Large ribosomal subunit protein bL21 (99 aa).

Belongs to the bacterial ribosomal protein bL21 family. In terms of assembly, part of the 50S ribosomal subunit. Contacts protein L20.

Functionally, this protein binds to 23S rRNA in the presence of protein L20. The sequence is that of Large ribosomal subunit protein bL21 from Mycoplasmopsis pulmonis (strain UAB CTIP) (Mycoplasma pulmonis).